A 383-amino-acid polypeptide reads, in one-letter code: MTKPLRIGIVAGELSGDTLGEGFIKSIKAQYPDAEFVGIGGPKMIAQGCDSLFDMEELAVMGLVEVLGRLPRLLKVKAELVRYFTQNPPDVFIGIDAPDFNLRLEKTLKDNGIKTVHYVSPSVWAWRPKRIFKIDAATDLVLAFLPFEKAFYDKYNVACEFIGHTLADAIPMETDKFAARELLGLEQDRKWLAVLPGSRGGEVALIAKPFIETCQRIHKQHPDMGFVVAAVNEKRREQFETIWKETAPELDFVIIQDTARNVMTAADAVLLASGTVALECMLVKRPMVVGYQVNKLTGWIAQKLSITEFVSLPNVLAGKELVQEFIQEECHPDFLYPAMEKVLDNDNSELIEKFTEMHQWIRKDADKQAANAVLRLINKETAE.

The protein belongs to the LpxB family.

The catalysed reaction is a lipid X + a UDP-2-N,3-O-bis[(3R)-3-hydroxyacyl]-alpha-D-glucosamine = a lipid A disaccharide + UDP + H(+). It functions in the pathway bacterial outer membrane biogenesis; LPS lipid A biosynthesis. In terms of biological role, condensation of UDP-2,3-diacylglucosamine and 2,3-diacylglucosamine-1-phosphate to form lipid A disaccharide, a precursor of lipid A, a phosphorylated glycolipid that anchors the lipopolysaccharide to the outer membrane of the cell. This Aliivibrio fischeri (strain MJ11) (Vibrio fischeri) protein is Lipid-A-disaccharide synthase.